Consider the following 319-residue polypeptide: uncharacterized protein (319 aa).

The segment covering 268 to 312 (SSVVAVTHPPSTTSTTTSVSETLSSFIAPSDLSSQPSPSSHPSSP) has biased composition (low complexity). The tract at residues 268-319 (SSVVAVTHPPSTTSTTTSVSETLSSFIAPSDLSSQPSPSSHPSSPFGNHNEF) is disordered.

This is an uncharacterized protein from Lepidoptera (butterflies and moths).